We begin with the raw amino-acid sequence, 512 residues long: Probable malate:quinone oxidoreductase (512 aa).

It belongs to the MQO family. Requires FAD as cofactor.

The catalysed reaction is (S)-malate + a quinone = a quinol + oxaloacetate. The protein operates within carbohydrate metabolism; tricarboxylic acid cycle; oxaloacetate from (S)-malate (quinone route): step 1/1. In Bradyrhizobium diazoefficiens (strain JCM 10833 / BCRC 13528 / IAM 13628 / NBRC 14792 / USDA 110), this protein is Probable malate:quinone oxidoreductase.